A 216-amino-acid polypeptide reads, in one-letter code: Ras-related protein RABE1a (216 aa).

22–29 (GDSGVGKS) serves as a coordination point for GTP. Residues 44–52 (FITTIGIDF) carry the Effector region motif. GTP contacts are provided by residues 70–74 (DTAGQ), 128–131 (NKAD), and 159–160 (SA). Residues 185-216 (DARAEPQTIKINQSDQGAGTSQATQKSACCGT) form a disordered region. Residues 193–216 (IKINQSDQGAGTSQATQKSACCGT) show a composition bias toward polar residues. S-geranylgeranyl cysteine attachment occurs at residues C213 and C214.

Belongs to the small GTPase superfamily. Rab family. Interacts with PI5K2.

It localises to the golgi apparatus membrane. Its subcellular location is the cell membrane. In terms of biological role, involved in membrane trafficking from the Golgi to the plasma membrane. The sequence is that of Ras-related protein RABE1a (RABE1A) from Arabidopsis thaliana (Mouse-ear cress).